The chain runs to 448 residues: Chromosomal replication initiator protein DnaA (448 aa).

The domain I, interacts with DnaA modulators stretch occupies residues 1–93 (MEQIVSSLWS…KPTEQNLSAS (93 aa)). Residues 94–110 (STNKEELTQDTVHKFKT) form a domain II region. Positions 111–328 (GLNGRLTFDN…GAINRVSAWC (218 aa)) are domain III, AAA+ region. The ATP site is built by Gly156, Gly158, Lys159, and Thr160. The interval 329–448 (NFTKRQITID…YTNLTRKLSS (120 aa)) is domain IV, binds dsDNA.

Belongs to the DnaA family. As to quaternary structure, oligomerizes as a right-handed, spiral filament on DNA at oriC.

The protein resides in the cytoplasm. Functionally, plays an essential role in the initiation and regulation of chromosomal replication. ATP-DnaA binds to the origin of replication (oriC) to initiate formation of the DNA replication initiation complex once per cell cycle. Binds the DnaA box (a 9 base pair repeat at the origin) and separates the double-stranded (ds)DNA. Forms a right-handed helical filament on oriC DNA; dsDNA binds to the exterior of the filament while single-stranded (ss)DNA is stabiized in the filament's interior. The ATP-DnaA-oriC complex binds and stabilizes one strand of the AT-rich DNA unwinding element (DUE), permitting loading of DNA polymerase. After initiation quickly degrades to an ADP-DnaA complex that is not apt for DNA replication. Binds acidic phospholipids. The sequence is that of Chromosomal replication initiator protein DnaA from Haemophilus ducreyi (strain 35000HP / ATCC 700724).